A 425-amino-acid chain; its full sequence is tRNA (guanine-N(7)-)-methyltransferase non-catalytic subunit wuho (425 aa).

Positions 67–102 are disordered; it reads ATCAGKEPGGKEQQLTKQPEEGGTTASGSGVTSTSV. Positions 88–102 are enriched in low complexity; it reads GGTTASGSGVTSTSV. WD repeat units follow at residues 97–138, 142–181, 185–224, 228–266, and 325–365; these read VTST…ARLL, PLAR…APPR, GHLS…DIHS, GHRE…ELLQ, and AGSW…PATS.

It belongs to the WD repeat TRM82 family. Forms a heterodimer with the catalytic subunit Mettl1. Interacts with mei-P26 and weakly interacts with bgcn; required for the function or formation of the mei-P26-bgcn-bam-sxl complex. Interacts with nanos; may be involved in mei-P26-dependent derepression of the BMP signaling pathway. Interacts with Myc; the interaction may be mediated by mei-P26 and may be involved in the regulation of ribosome biogenesis. In testis, it is present at high level in hub cells, a niche for germline stem cells of testis. Ubiquitously expressed in all testicular cells throughout spermatogenesis. Ubiquitously expressed in all germline and somatic cells of the ovary.

The protein resides in the nucleus. Its subcellular location is the cytoplasm. Its pathway is tRNA modification; N(7)-methylguanine-tRNA biosynthesis. Required for the Mettl1-dependent formation of N(7)-methylguanine at position 46 (m7G46) in tRNA. In the Mettl1-wuho methyltransferase complex, it is required to stabilize and induce conformational changes of the catalytic subunit. Required for binding of nanos mRNA and repression of translation by the mei-P26-bgcn-bam-sxl complex. May cooperate with mei-P26 and nanos to derepress the BMP signaling pathway. May cooperate with mei-P26 to suppress expression of a subset of microRNAs. May cooperate with mei-P26 to regulate bam expression levels in germline cells during gametogenesis. Required to promote mitosis to meiosis transition during gametogenesis. May regulate germline cell division in part by regulating ribosome biogenesis. This is tRNA (guanine-N(7)-)-methyltransferase non-catalytic subunit wuho from Drosophila yakuba (Fruit fly).